We begin with the raw amino-acid sequence, 209 residues long: Redox-sensing transcriptional repressor Rex (209 aa).

The H-T-H motif DNA-binding region spans 16-55; the sequence is LYYRFIQNLSLSGKQRVSSAELSEAVKVDSATIRRDFSYF. 90–95 contacts NAD(+); the sequence is GVGNLG.

The protein belongs to the transcriptional regulatory Rex family. As to quaternary structure, homodimer.

It localises to the cytoplasm. In terms of biological role, modulates transcription in response to changes in cellular NADH/NAD(+) redox state. The sequence is that of Redox-sensing transcriptional repressor Rex from Bacillus cereus (strain G9842).